Here is a 216-residue protein sequence, read N- to C-terminus: MSLPMLQVALDNQTMDSAYETTRLIAEEVDIIEVGTILCVGEGVRAVRDLKALYPHKIVLADAKIADAGKILSRMCFEANADWVTVICCADINTAKGALDVAKEFNGDVQIELTGYWTWEQAQQWRDAGIGQVVYHRSRDAQAAGVAWGEADITAIKRLSDMGFKVTVTGGLALEDLPLFKGIPIHVFIAGRSIRDAASPVEAARQFKRSIAELWG.

A substrate-binding site is contributed by aspartate 11. Mg(2+) is bound by residues glutamate 33 and aspartate 62. Residue arginine 192 participates in substrate binding.

It belongs to the HPS/KGPDC family. KGPDC subfamily. As to quaternary structure, homodimer. Mg(2+) serves as cofactor.

It carries out the reaction 3-dehydro-L-gulonate 6-phosphate + H(+) = L-xylulose 5-phosphate + CO2. It participates in cofactor degradation; L-ascorbate degradation; D-xylulose 5-phosphate from L-ascorbate: step 2/4. Functionally, catalyzes the decarboxylation of 3-keto-L-gulonate-6-P into L-xylulose-5-P. Is involved in the anaerobic L-ascorbate utilization. The protein is 3-keto-L-gulonate-6-phosphate decarboxylase UlaD of Escherichia coli O127:H6 (strain E2348/69 / EPEC).